A 428-amino-acid polypeptide reads, in one-letter code: Dihydroorotase (428 aa).

The Zn(2+) site is built by H59 and H61. Substrate contacts are provided by residues 61–63 (HLR) and N93. Residues D151, H178, and H231 each coordinate Zn(2+). N277 is a substrate binding site. D304 is a Zn(2+) binding site. D304 is a catalytic residue. Residues H308 and 322–323 (FG) contribute to the substrate site.

It belongs to the metallo-dependent hydrolases superfamily. DHOase family. Class I DHOase subfamily. The cofactor is Zn(2+).

The enzyme catalyses (S)-dihydroorotate + H2O = N-carbamoyl-L-aspartate + H(+). Its pathway is pyrimidine metabolism; UMP biosynthesis via de novo pathway; (S)-dihydroorotate from bicarbonate: step 3/3. Functionally, catalyzes the reversible cyclization of carbamoyl aspartate to dihydroorotate. In Bacillus cereus (strain AH187), this protein is Dihydroorotase.